Reading from the N-terminus, the 32-residue chain is Chaperone protein DnaK (32 aa).

This sequence belongs to the heat shock protein 70 family.

Its function is as follows. Acts as a chaperone. This Anabaena sp. (strain L31) protein is Chaperone protein DnaK.